We begin with the raw amino-acid sequence, 428 residues long: Chaperone SurA (428 aa).

The signal sequence occupies residues 1–20 (MKNWKTLLLGIAMIANTSFA). PpiC domains are found at residues 171–272 (STEL…KVND) and 282–382 (VTEV…ELLD).

It is found in the periplasm. It catalyses the reaction [protein]-peptidylproline (omega=180) = [protein]-peptidylproline (omega=0). Its function is as follows. Chaperone involved in the correct folding and assembly of outer membrane proteins. Recognizes specific patterns of aromatic residues and the orientation of their side chains, which are found more frequently in integral outer membrane proteins. May act in both early periplasmic and late outer membrane-associated steps of protein maturation. In Shigella dysenteriae serotype 1 (strain Sd197), this protein is Chaperone SurA.